A 257-amino-acid polypeptide reads, in one-letter code: Uridylate kinase (257 aa).

8-11 (KLSG) contacts ATP. The involved in allosteric activation by GTP stretch occupies residues 21–26 (GSAGFG). G56 provides a ligand contact to UMP. The ATP site is built by G57 and R61. UMP-binding positions include D75 and 136 to 143 (NGAPFFTT). ATP is bound by residues N164, Y170, and D173.

It belongs to the UMP kinase family. As to quaternary structure, homohexamer.

It is found in the cytoplasm. The catalysed reaction is UMP + ATP = UDP + ADP. It participates in pyrimidine metabolism; CTP biosynthesis via de novo pathway; UDP from UMP (UMPK route): step 1/1. With respect to regulation, allosterically activated by GTP. Inhibited by UTP. Catalyzes the reversible phosphorylation of UMP to UDP. The polypeptide is Uridylate kinase (Deinococcus geothermalis (strain DSM 11300 / CIP 105573 / AG-3a)).